An 89-amino-acid chain; its full sequence is Large ribosomal subunit protein bL28 (89 aa).

The protein belongs to the bacterial ribosomal protein bL28 family.

This Chlamydia muridarum (strain MoPn / Nigg) protein is Large ribosomal subunit protein bL28.